We begin with the raw amino-acid sequence, 310 residues long: Protein N-terminal asparagine amidohydrolase (310 aa).

As to quaternary structure, monomer.

Its subcellular location is the cytoplasm. The catalysed reaction is N-terminal L-asparaginyl-[protein] + H2O + H(+) = N-terminal L-aspartyl-[protein] + NH4(+). With respect to regulation, inhibited by micromolar concentrations of copper and zinc ions. Functionally, N-terminal asparagine deamidase that mediates deamidation of N-terminal asparagine residues to aspartate. Required for the ubiquitin-dependent turnover of intracellular proteins that initiate with Met-Asn. These proteins are acetylated on the retained initiator methionine and can subsequently be modified by the removal of N-acetyl methionine by acylaminoacid hydrolase (AAH). Conversion of the resulting N-terminal asparagine to aspartate by NTAN1/PNAD renders the protein susceptible to arginylation, polyubiquitination and degradation as specified by the N-end rule. This enzyme does not act on substrates with internal or C-terminal asparagines and does not act on glutamine residues in any position, nor on acetylated N-terminal peptidyl Asn. In Homo sapiens (Human), this protein is Protein N-terminal asparagine amidohydrolase (NTAN1).